The sequence spans 292 residues: tRNA pseudouridine synthase B (292 aa).

The active-site Nucleophile is the aspartate 38.

This sequence belongs to the pseudouridine synthase TruB family. Type 1 subfamily.

The catalysed reaction is uridine(55) in tRNA = pseudouridine(55) in tRNA. In terms of biological role, responsible for synthesis of pseudouridine from uracil-55 in the psi GC loop of transfer RNAs. This is tRNA pseudouridine synthase B from Streptococcus gordonii (strain Challis / ATCC 35105 / BCRC 15272 / CH1 / DL1 / V288).